The primary structure comprises 186 residues: MSVADVKKGVEQKMQRSIEAFKNDLAKIRTGRAHTGLLDHVQVDYYGSMVPISQVANLTLVDARTIGVQPWEKNMVAKVEKAIREADLGLNPATAGDLIRVPMPALTEERRRELTKVVKSEGETAKVAIRNLRRDANEALKKLVKDKEISEDDERRASDDVQKLTDKHVAEVDKLVQSKEAEIMTV.

The protein belongs to the RRF family.

Its subcellular location is the cytoplasm. In terms of biological role, responsible for the release of ribosomes from messenger RNA at the termination of protein biosynthesis. May increase the efficiency of translation by recycling ribosomes from one round of translation to another. This Burkholderia ambifaria (strain ATCC BAA-244 / DSM 16087 / CCUG 44356 / LMG 19182 / AMMD) (Burkholderia cepacia (strain AMMD)) protein is Ribosome-recycling factor.